Here is a 314-residue protein sequence, read N- to C-terminus: tRNA dimethylallyltransferase 1 (314 aa).

Residue 8–15 (GPTGTGKS) coordinates ATP. Residue 10–15 (TGTGKS) coordinates substrate.

The protein belongs to the IPP transferase family. Monomer. Mg(2+) serves as cofactor.

The catalysed reaction is adenosine(37) in tRNA + dimethylallyl diphosphate = N(6)-dimethylallyladenosine(37) in tRNA + diphosphate. In terms of biological role, catalyzes the transfer of a dimethylallyl group onto the adenine at position 37 in tRNAs that read codons beginning with uridine, leading to the formation of N6-(dimethylallyl)adenosine (i(6)A). The protein is tRNA dimethylallyltransferase 1 of Mycobacterium marinum (strain ATCC BAA-535 / M).